Here is a 79-residue protein sequence, read N- to C-terminus: uncharacterized protein (79 aa).

Residues 1 to 27 form a disordered region; it reads MRQRGQEHLPTSVKSEPRACNNPTVAE.

This is an uncharacterized protein from Homo sapiens (Human).